The primary structure comprises 157 residues: ADP-ribosylation factor-like protein 2-binding protein (157 aa).

It belongs to the ARL2BP family.

It is found in the cytoplasm. The protein localises to the mitochondrion intermembrane space. The protein resides in the cytoskeleton. It localises to the microtubule organizing center. Its subcellular location is the centrosome. It is found in the nucleus. The protein localises to the spindle. The protein resides in the cilium basal body. Plays a role as an effector of the ADP-ribosylation factor-like protein 2, ARL2. The sequence is that of ADP-ribosylation factor-like protein 2-binding protein (arl2bp) from Xenopus tropicalis (Western clawed frog).